Consider the following 435-residue polypeptide: Angio-associated migratory cell protein (435 aa).

The segment at 1 to 65 is disordered; the sequence is MESESESGAA…EEEEEGNEEG (65 aa). Residue S20 is modified to Phosphoserine. A compositionally biased stretch (acidic residues) spans 39–63; that stretch reads DPDDLAQEMEDVDFEEEEEEEEGNE. 8 WD repeats span residues 90–130, 133–172, 174–213, 215–255, 259–300, 316–355, 357–396, and 399–434; these read LHSA…LLFE, GHKD…EVWS, EAGD…KTFQ, PNCP…HVLK, GHQG…GVFR, SESN…LRHQ, QHQS…LLTD, and GHTA…QRPD.

Its subcellular location is the cell membrane. The protein resides in the cytoplasm. Functionally, plays a role in angiogenesis and cell migration. In smooth muscle cell migration, may act through the RhoA pathway. The chain is Angio-associated migratory cell protein (AAMP) from Canis lupus familiaris (Dog).